The chain runs to 443 residues: Tryptophan synthase beta chain 2, chloroplastic (443 aa).

The disordered stretch occupies residues 1 to 32; it reads PGPPPPAPEGRRRRGRGRNAAGQAVAAEASPA. The N-terminal 45 residues, 1 to 45, are a transit peptide targeting the chloroplast; that stretch reads PGPPPPAPEGRRRRGRGRNAAGQAVAAEASPAAVEMGNGAAAPGL. The segment covering 18 to 32 has biased composition (low complexity); sequence RNAAGQAVAAEASPA. The residue at position 138 (K138) is an N6-(pyridoxal phosphate)lysine.

It belongs to the TrpB family. Tetramer of two alpha and two beta chains. The cofactor is pyridoxal 5'-phosphate.

Its subcellular location is the plastid. It localises to the chloroplast. The enzyme catalyses (1S,2R)-1-C-(indol-3-yl)glycerol 3-phosphate + L-serine = D-glyceraldehyde 3-phosphate + L-tryptophan + H2O. Its pathway is amino-acid biosynthesis; L-tryptophan biosynthesis; L-tryptophan from chorismate: step 5/5. The beta subunit is responsible for the synthesis of L-tryptophan from indole and L-serine. The sequence is that of Tryptophan synthase beta chain 2, chloroplastic (TSB2) from Zea mays (Maize).